We begin with the raw amino-acid sequence, 311 residues long: MRLSWLLRKSFDFGEREVAHWFPGHMAKGLKQMKTKLKNLDCIVEVHDARIPLSGRNPIFQDSLGMKPHLLILNKMDLADLTQKKRILAQLKQQGVGNVIFTDCVKDQNIKHVVPVISELVGCSQRFHREENTETCIMVIGVPNVGKSSLINALRRMHLRKGKASRVGAEPGITRSVLTKIQVSESPLIFLFDTPGVLSPRIESVETGMKLALCGTILDHLVGEDIMADYLLYILNQQMQHRYVEHYGLEKPCADIETLLKRIALKLGKTQKVKAITGVGDVNITVPNYNAAAYDFIRTFRRGQLGVVMLD.

Residues 27-200 (AKGLKQMKTK…LFDTPGVLSP (174 aa)) form the CP-type G domain. Residues 74-77 (NKMD), 144-149 (NVGKSS), and Gly-196 each bind GTP.

The protein belongs to the TRAFAC class YlqF/YawG GTPase family. MTG1 subfamily.

It is found in the mitochondrion inner membrane. Its function is as follows. Plays a role in the regulation of the mitochondrial ribosome assembly and of translational activity. Displays mitochondrial GTPase activity. The polypeptide is Mitochondrial ribosome-associated GTPase 1 (Xenopus tropicalis (Western clawed frog)).